The following is a 77-amino-acid chain: Translation initiation factor IF-1, chloroplastic (77 aa).

Residues 1-71 (MKEQKWTHEG…TRGRIIYRLR (71 aa)) form the S1-like domain.

Belongs to the IF-1 family. In terms of assembly, component of the 30S ribosomal translation pre-initiation complex which assembles on the 30S ribosome in the order IF-2 and IF-3, IF-1 and N-formylmethionyl-tRNA(fMet); mRNA recruitment can occur at any time during PIC assembly.

Its subcellular location is the plastid. It localises to the chloroplast. One of the essential components for the initiation of protein synthesis. Stabilizes the binding of IF-2 and IF-3 on the 30S subunit to which N-formylmethionyl-tRNA(fMet) subsequently binds. Helps modulate mRNA selection, yielding the 30S pre-initiation complex (PIC). Upon addition of the 50S ribosomal subunit IF-1, IF-2 and IF-3 are released leaving the mature 70S translation initiation complex. The protein is Translation initiation factor IF-1, chloroplastic of Coffea arabica (Arabian coffee).